The sequence spans 116 residues: Large ribosomal subunit protein bL19 (116 aa).

The protein belongs to the bacterial ribosomal protein bL19 family.

In terms of biological role, this protein is located at the 30S-50S ribosomal subunit interface and may play a role in the structure and function of the aminoacyl-tRNA binding site. The polypeptide is Large ribosomal subunit protein bL19 (Staphylococcus haemolyticus (strain JCSC1435)).